The following is a 433-amino-acid chain: Serine/threonine-protein kinase toxin HipA (433 aa).

Ser-147 carries the post-translational modification Phosphoserine; by autocatalysis. ATP is bound by residues Val-151 to Lys-154, Lys-178, and Glu-220 to Phe-222. The active-site Proton acceptor is the Asp-306. ATP is bound by residues His-308–Asn-311 and Tyr-327–Asp-328. 2 consecutive DNA-binding regions follow at residues Arg-380 to Arg-384 and Arg-429.

Belongs to the HipA Ser/Thr kinase family. In terms of assembly, monomer. Forms a HipA(2)HipB(2)-DNA complex with cognate antitoxin HipB; has higher affinity for the latter when HipB is prebound to DNA and HipA is phosphorylated. Binds DNA in the ternary complex.

It carries out the reaction L-seryl-[protein] + ATP = O-phospho-L-seryl-[protein] + ADP + H(+). The catalysed reaction is L-threonyl-[protein] + ATP = O-phospho-L-threonyl-[protein] + ADP + H(+). Toxic component of a type II toxin-antitoxin (TA) system; overexpression in wild-type temporarily inhibits cell growth, overexpression in a hipAB deletion leads to acute growth inhibition. The toxic effect of HipA is neutralized by its cognate antitoxin HipB. In the ternary phosphoserine-HipA-HipB-DNA complex the DNA is bent about 125 degrees; all HipA in the crystallized ternary complex is phosphorylated. In E.coli phosphorylation of HipA is thought to release HipB from the HipA-HipB-DNA complex, suggesting the complex functions differently in the 2 bacteria. Phosphorylates Glu-tRNA-ligase (GltX, on 'Ser-239') in vivo, with HipB probably acts as a corepressor for transcription of the hipBA promoter. The polypeptide is Serine/threonine-protein kinase toxin HipA (Shewanella oneidensis (strain ATCC 700550 / JCM 31522 / CIP 106686 / LMG 19005 / NCIMB 14063 / MR-1)).